Here is a 480-residue protein sequence, read N- to C-terminus: Aromatic-L-amino-acid decarboxylase (480 aa).

At Met1 the chain carries N-acetylmethionine. Tandem repeats lie at residues 58 to 115 and 118 to 178. The interval 58-178 is 2 X approximate tandem repeats; it reads GDIERIIMPG…AASPELTQAA (121 aa). Thr82 contacts substrate. The pyridoxal 5'-phosphate site is built by Ala148 and Ser149. A substrate-binding site is contributed by His192. Pyridoxal 5'-phosphate-binding residues include Thr246 and Asn300. The residue at position 303 (Lys303) is an N6-(pyridoxal phosphate)lysine.

Belongs to the group II decarboxylase family. As to quaternary structure, homodimer. Pyridoxal 5'-phosphate serves as cofactor.

The enzyme catalyses L-dopa + H(+) = dopamine + CO2. It carries out the reaction 5-hydroxy-L-tryptophan + H(+) = serotonin + CO2. Its pathway is catecholamine biosynthesis; dopamine biosynthesis; dopamine from L-tyrosine: step 2/2. Its function is as follows. Catalyzes the decarboxylation of L-3,4-dihydroxyphenylalanine (DOPA) to dopamine and L-5-hydroxytryptophan to serotonin. This chain is Aromatic-L-amino-acid decarboxylase (DDC), found in Cavia porcellus (Guinea pig).